Here is a 438-residue protein sequence, read N- to C-terminus: Xylose isomerase (438 aa).

D306 and D308 together coordinate Mg(2+).

It belongs to the xylose isomerase family. As to quaternary structure, homotetramer. Mg(2+) serves as cofactor.

Its subcellular location is the cytoplasm. The enzyme catalyses alpha-D-xylose = alpha-D-xylulofuranose. The chain is Xylose isomerase from Pseudomonas fluorescens (strain SBW25).